A 56-amino-acid polypeptide reads, in one-letter code: Large ribosomal subunit protein bL33 (56 aa).

It belongs to the bacterial ribosomal protein bL33 family.

This Nocardioides sp. (strain ATCC BAA-499 / JS614) protein is Large ribosomal subunit protein bL33.